We begin with the raw amino-acid sequence, 210 residues long: Thymidylate kinase (210 aa).

10–17 (GLEGAGKS) contacts ATP.

The protein belongs to the thymidylate kinase family.

The catalysed reaction is dTMP + ATP = dTDP + ADP. Its function is as follows. Phosphorylation of dTMP to form dTDP in both de novo and salvage pathways of dTTP synthesis. The polypeptide is Thymidylate kinase (tmk) (Haemophilus influenzae (strain ATCC 51907 / DSM 11121 / KW20 / Rd)).